Here is an 88-residue protein sequence, read N- to C-terminus: LYR motif-containing protein 2 (88 aa).

A mitochondrion-targeting transit peptide spans 1-19 (MATSRLPPATLTLKQFMRR).

Belongs to the complex I LYR family.

It localises to the mitochondrion. Involved in efficient integration of the N-module into mitochondrial respiratory chain complex I. This chain is LYR motif-containing protein 2 (LYRM2), found in Bos taurus (Bovine).